We begin with the raw amino-acid sequence, 89 residues long: MAVADIKTAEIVKDNARSANDTGSPEVQVSLLTARINELTPHFKANAKDHHSRRGLLKMVSRRRRLLDYLKGKDLDRYRALIEKLGLRK.

Belongs to the universal ribosomal protein uS15 family. In terms of assembly, part of the 30S ribosomal subunit. Forms a bridge to the 50S subunit in the 70S ribosome, contacting the 23S rRNA.

Its function is as follows. One of the primary rRNA binding proteins, it binds directly to 16S rRNA where it helps nucleate assembly of the platform of the 30S subunit by binding and bridging several RNA helices of the 16S rRNA. In terms of biological role, forms an intersubunit bridge (bridge B4) with the 23S rRNA of the 50S subunit in the ribosome. This chain is Small ribosomal subunit protein uS15, found in Polynucleobacter asymbioticus (strain DSM 18221 / CIP 109841 / QLW-P1DMWA-1) (Polynucleobacter necessarius subsp. asymbioticus).